We begin with the raw amino-acid sequence, 478 residues long: PRAME family member 27 (478 aa).

An LRR 1 repeat occupies 17-40 (RSLLRDQALAMSTLEELPTELFPP). The stretch at 99 to 126 (RWKLQVLDLQDVCENFWMVWSEAMARGS) is one LRR 1; degenerate repeat. Residues 181-205 (HLCCKKLKILGMPFRNIRSILKMVN) form an LRR 2; degenerate repeat. The stretch at 206 to 232 (LDCIQEVEVNCKWVLPILTQFTPYLGH) is one LRR 3; degenerate repeat. One copy of the LRR 4; degenerate repeat lies at 233-268 (MRNLQKLVLSHMDVSRYVSPEQKKEIVTQFTTQFLK). 5 LRR repeats span residues 269–294 (LHCL…LSCL), 295–326 (KTSL…SQLK), 327–348 (TLDL…ILLE), 351–378 (AATL…ALSR), and 379–403 (CFEL…LLSH).

The protein belongs to the PRAME family.

This chain is PRAME family member 27, found in Homo sapiens (Human).